Consider the following 388-residue polypeptide: Flavin-dependent monooxygenase (388 aa).

Residues 26 to 27 (PV) and 45 to 48 (YERD) contribute to the FAD site. NADPH is bound at residue R54. Residues D61, R117, and L139 each coordinate FAD. Substrate-binding residues include Q192 and R213. Residues D311 and 321–324 (GQGV) each bind FAD.

The protein belongs to the aromatic-ring hydroxylase family. TetX subfamily. Monomer. The cofactor is FAD.

The protein resides in the cytoplasm. The enzyme catalyses a tetracycline + NADPH + O2 + H(+) = an 11a-hydroxytetracycline + NADP(+) + H2O. It carries out the reaction tetracycline + NADPH + O2 + H(+) = 11a-hydroxytetracycline + NADP(+) + H2O. It catalyses the reaction tigecycline + NADPH + O2 + H(+) = 11a-hydroxytigecycline + NADP(+) + H2O. The catalysed reaction is oxytetracycline + NADPH + O2 + H(+) = 11a-hydroxy-oxytetracycline + NADP(+) + H2O. Anhydrotetracycline, a poor substrate, prevents tetracycline degradation in vitro. An FAD-requiring monooxygenase active on tetracycline antibiotic derivatives, which leads to their inactivation. Hydroxylates carbon 11a of oxytetracycline and tigecycline. Acts on many tetracycline analogs (chlorotetracycline, demeclocycline, doxycycline, minocycline, oxytetracyclinee), probably by monooxygenization. Tigecycline, a new generation tetracycline antibiotic, is rendered less effective against E.coli by this monooxygenation, is much weaker at inhibiting translation in vitro and binds Mg(2+) considerably less well. Expression in E.coli BW25113 reduces its growth rate about 5%. The reaction probably proceeds by FAD reduction by NADPH and, second, hydroxylation of antibiotic in a ping-pong mechanism. Degrades chlortetracycline, probably by monooxygenation. Slowly oxidizes anhydrotetracycline, the final substrate in tetracycline biosynthesis. This Bacteroides thetaiotaomicron protein is Flavin-dependent monooxygenase.